The following is a 449-amino-acid chain: uncharacterized protein (449 aa).

Ser-420 carries the phosphoserine modification.

It belongs to the NAD kinase family.

It is found in the cytoplasm. The protein resides in the nucleus. This is an uncharacterized protein from Schizosaccharomyces pombe (strain 972 / ATCC 24843) (Fission yeast).